The sequence spans 66 residues: Large ribosomal subunit protein uL29 (66 aa).

The protein belongs to the universal ribosomal protein uL29 family.

The chain is Large ribosomal subunit protein uL29 from Geobacillus thermodenitrificans (strain NG80-2).